We begin with the raw amino-acid sequence, 376 residues long: uncharacterized protein (376 aa).

The N-terminal stretch at 1-22 (MVATGRIIITLLAAALDEIILA) is a signal peptide.

The protein belongs to the ascovirus HvAV ORF17 family.

This is an uncharacterized protein from Heliothis virescens ascovirus 3e (HvAV-3e).